Reading from the N-terminus, the 177-residue chain is Large ribosomal subunit protein uL6 (177 aa).

Belongs to the universal ribosomal protein uL6 family. Part of the 50S ribosomal subunit.

Its function is as follows. This protein binds to the 23S rRNA, and is important in its secondary structure. It is located near the subunit interface in the base of the L7/L12 stalk, and near the tRNA binding site of the peptidyltransferase center. In Proteus mirabilis (strain HI4320), this protein is Large ribosomal subunit protein uL6.